The sequence spans 449 residues: Putative F-box/FBD/LRR-repeat protein At3g49480 (449 aa).

Residues 11 to 59 (EDRISSLPDDLLVKILLCVPTKDAAATTFLSKRWRFVWRMLPRLNYIET) form the F-box domain. LRR repeat units lie at residues 60–91 (TSDV…WIDL), 153–180 (RLTL…DLFC), 182–206 (VYKD…KVTR), 235–260 (FRED…HIFD), 275–302 (VTVV…ALSP), and 327–352 (SEYD…LVDS). Residues 364-412 (WNQPSSIPRCLSSHLEIFEWDGYVGREDEKKIIRYILENSKYLKTAGIS) form the FBD domain.

In Arabidopsis thaliana (Mouse-ear cress), this protein is Putative F-box/FBD/LRR-repeat protein At3g49480.